The chain runs to 271 residues: Formamidopyrimidine-DNA glycosylase (271 aa).

The active-site Schiff-base intermediate with DNA is the Pro2. Glu3 acts as the Proton donor in catalysis. Residue Lys58 is the Proton donor; for beta-elimination activity of the active site. DNA is bound by residues His90, Arg108, and Arg151. The FPG-type; degenerate zinc finger occupies 236 to 271; that stretch reads QVYGRDGQPCHRDDGGTIRRFAQGGRSTWYCPRCQR. Residue Arg261 is the Proton donor; for delta-elimination activity of the active site.

The protein belongs to the FPG family. Monomer. It depends on Zn(2+) as a cofactor.

The catalysed reaction is Hydrolysis of DNA containing ring-opened 7-methylguanine residues, releasing 2,6-diamino-4-hydroxy-5-(N-methyl)formamidopyrimidine.. The enzyme catalyses 2'-deoxyribonucleotide-(2'-deoxyribose 5'-phosphate)-2'-deoxyribonucleotide-DNA = a 3'-end 2'-deoxyribonucleotide-(2,3-dehydro-2,3-deoxyribose 5'-phosphate)-DNA + a 5'-end 5'-phospho-2'-deoxyribonucleoside-DNA + H(+). Functionally, involved in base excision repair of DNA damaged by oxidation or by mutagenic agents. Acts as a DNA glycosylase that recognizes and removes damaged bases. Has a preference for oxidized purines, such as 7,8-dihydro-8-oxoguanine (8-oxoG). Has AP (apurinic/apyrimidinic) lyase activity and introduces nicks in the DNA strand. Cleaves the DNA backbone by beta-delta elimination to generate a single-strand break at the site of the removed base with both 3'- and 5'-phosphates. The sequence is that of Formamidopyrimidine-DNA glycosylase from Erythrobacter litoralis (strain HTCC2594).